Consider the following 323-residue polypeptide: Aldo-keto reductase family 1 member C18 (323 aa).

Residues 20-24 and Asp50 contribute to the NADP(+) site; that span reads GFGTY. Tyr55 (proton donor) is an active-site residue. His117 lines the substrate pocket. Residues 166–167, Gln190, 216–221, and 270–280 each bind NADP(+); these read SN, YGALGT, and KSFNEERIREN.

The protein belongs to the aldo/keto reductase family. In terms of assembly, monomer.

It localises to the cytoplasm. It catalyses the reaction (17R,20S)-17,20-dihydroxypregn-4-en-3-one + NADP(+) = 17alpha-hydroxyprogesterone + NADPH + H(+). The enzyme catalyses (17R,20S)-17,20-dihydroxypregn-4-en-3-one + NAD(+) = 17alpha-hydroxyprogesterone + NADH + H(+). Catalyzes the conversion of progesterone into 20-alpha-dihydroprogesterone (20 alpha-OHP). The polypeptide is Aldo-keto reductase family 1 member C18 (Akr1c18) (Mus musculus (Mouse)).